Here is a 243-residue protein sequence, read N- to C-terminus: MVKIAHIHMSGCTGCLISLTDTYEKLLDILGSVELVYALTLTGEKTEITETDDKILIERDIPGGIDIALVEGSVCLDDHHSMDDILTTRKNSKKSLVALGACAASGGVTRFRRVGQMSQPSHASFVPIGDVIKVDLALPGCPPSTESIVKLLTAALEGDMEYLEPFAEIAKYGKDACGCDVIKEVINKSLCMGCGTCAAACQVNAIDMVEAKPNINSEFCIKCGICSAQCPRVRFPEIIRKLE.

4Fe-4S ferredoxin-type domains lie at 182 to 210 (IKEV…DMVE) and 211 to 241 (AKPN…IIRK). [4Fe-4S] cluster is bound by residues C191, C194, C197, C201, C220, C223, C226, and C230.

The protein belongs to the FrhG family. In terms of assembly, complex of alpha, beta and gamma subunits. Ni(2+) is required as a cofactor. Requires iron-sulfur cluster as cofactor. The cofactor is FAD.

It catalyses the reaction oxidized coenzyme F420-(gamma-L-Glu)(n) + H2 + H(+) = reduced coenzyme F420-(gamma-L-Glu)(n). Its function is as follows. Reduces the physiological low-potential two-electron acceptor coenzyme F420, and the artificial one-electron acceptor methylviologen. The protein is Coenzyme F420 hydrogenase subunit gamma (frhG) of Methanococcus voltae.